Consider the following 319-residue polypeptide: Ribosomal protein uL3 glutamine methyltransferase (319 aa).

It belongs to the protein N5-glutamine methyltransferase family. PrmB subfamily.

It catalyses the reaction L-glutaminyl-[ribosomal protein uL3] + S-adenosyl-L-methionine = N(5)-methyl-L-glutaminyl-[ribosomal protein uL3] + S-adenosyl-L-homocysteine + H(+). Functionally, methylates large ribosomal subunit protein uL3 on a specific glutamine residue. The protein is Ribosomal protein uL3 glutamine methyltransferase of Bradyrhizobium diazoefficiens (strain JCM 10833 / BCRC 13528 / IAM 13628 / NBRC 14792 / USDA 110).